Here is a 357-residue protein sequence, read N- to C-terminus: uncharacterized protein (357 aa).

Residues 6 to 32 (CIVCRQKKIKCDRKNPCTNCEQAGEKC) constitute a DNA-binding region (zn(2)-C6 fungal-type).

Its subcellular location is the nucleus. This is an uncharacterized protein from Schizosaccharomyces pombe (strain 972 / ATCC 24843) (Fission yeast).